Consider the following 44-residue polypeptide: Alpha-amylase inhibitor WDAI-3 (44 aa).

An intrachain disulfide couples Cys-20 to Cys-41.

It belongs to the protease inhibitor I6 (cereal trypsin/alpha-amylase inhibitor) family. As to quaternary structure, homodimer. Post-translationally, the disulfide bonds are essential for the inhibitor activity. Endosperm.

The protein resides in the secreted. Alpha-amylase inhibitor. This chain is Alpha-amylase inhibitor WDAI-3 (IHA-B1-2), found in Triticum aestivum (Wheat).